Consider the following 100-residue polypeptide: Urease subunit gamma (100 aa).

Belongs to the urease gamma subunit family. Heterotrimer of UreA (gamma), UreB (beta) and UreC (alpha) subunits. Three heterotrimers associate to form the active enzyme.

The protein localises to the cytoplasm. It catalyses the reaction urea + 2 H2O + H(+) = hydrogencarbonate + 2 NH4(+). It functions in the pathway nitrogen metabolism; urea degradation; CO(2) and NH(3) from urea (urease route): step 1/1. The sequence is that of Urease subunit gamma from Cupriavidus necator (strain ATCC 17699 / DSM 428 / KCTC 22496 / NCIMB 10442 / H16 / Stanier 337) (Ralstonia eutropha).